Reading from the N-terminus, the 154-residue chain is Large ribosomal subunit protein uL13 (154 aa).

It belongs to the universal ribosomal protein uL13 family. In terms of assembly, part of the 50S ribosomal subunit.

Its function is as follows. This protein is one of the early assembly proteins of the 50S ribosomal subunit, although it is not seen to bind rRNA by itself. It is important during the early stages of 50S assembly. The protein is Large ribosomal subunit protein uL13 of Bartonella tribocorum (strain CIP 105476 / IBS 506).